We begin with the raw amino-acid sequence, 504 residues long: L-carnitine/gamma-butyrobetaine antiporter (504 aa).

12 helical membrane passes run 10–30, 51–71, 92–112, 143–163, 195–215, 231–251, 263–283, 316–336, 347–367, 398–418, 446–466, and 475–495; these read MEPKVFFPPLIIVGILCWLTV, WGWAFEWYMVVMLFGWFWLVF, IFMMFASCTSAAVLFWGSIEI, GPLPWATYSFLSVAFAYFFFV, FYLVALIFAMGTSLGLATPLV, LDAIIITCWIILNAICVACGL, SYLSFLMLGWVFIVSGASFIM, WSVFYWAWWVIYAIQMSIFLA, LCFGMVLGLTASTWILWTVLG, WAALPLSTATMWGFFILCFIA, LLVRIGWSILVGIIGIVLLAL, and AIIAGGCPLFFVNIMVTLSFI.

It belongs to the BCCT transporter (TC 2.A.15) family. CaiT subfamily. Homotrimer.

It is found in the cell inner membrane. It carries out the reaction 4-(trimethylamino)butanoate(in) + (R)-carnitine(out) = 4-(trimethylamino)butanoate(out) + (R)-carnitine(in). The protein operates within amine and polyamine metabolism; carnitine metabolism. Functionally, catalyzes the exchange of L-carnitine for gamma-butyrobetaine. In Shigella dysenteriae serotype 1 (strain Sd197), this protein is L-carnitine/gamma-butyrobetaine antiporter.